The sequence spans 197 residues: ATP-dependent Clp protease proteolytic subunit (197 aa).

The active-site Nucleophile is the Ser-98. His-123 is a catalytic residue.

It belongs to the peptidase S14 family. Fourteen ClpP subunits assemble into 2 heptameric rings which stack back to back to give a disk-like structure with a central cavity, resembling the structure of eukaryotic proteasomes.

It localises to the cytoplasm. It catalyses the reaction Hydrolysis of proteins to small peptides in the presence of ATP and magnesium. alpha-casein is the usual test substrate. In the absence of ATP, only oligopeptides shorter than five residues are hydrolyzed (such as succinyl-Leu-Tyr-|-NHMec, and Leu-Tyr-Leu-|-Tyr-Trp, in which cleavage of the -Tyr-|-Leu- and -Tyr-|-Trp bonds also occurs).. Functionally, cleaves peptides in various proteins in a process that requires ATP hydrolysis. Has a chymotrypsin-like activity. Plays a major role in the degradation of misfolded proteins. This chain is ATP-dependent Clp protease proteolytic subunit, found in Limosilactobacillus reuteri (strain DSM 20016) (Lactobacillus reuteri).